We begin with the raw amino-acid sequence, 149 residues long: SsrA-binding protein (149 aa).

The protein belongs to the SmpB family.

The protein localises to the cytoplasm. Required for rescue of stalled ribosomes mediated by trans-translation. Binds to transfer-messenger RNA (tmRNA), required for stable association of tmRNA with ribosomes. tmRNA and SmpB together mimic tRNA shape, replacing the anticodon stem-loop with SmpB. tmRNA is encoded by the ssrA gene; the 2 termini fold to resemble tRNA(Ala) and it encodes a 'tag peptide', a short internal open reading frame. During trans-translation Ala-aminoacylated tmRNA acts like a tRNA, entering the A-site of stalled ribosomes, displacing the stalled mRNA. The ribosome then switches to translate the ORF on the tmRNA; the nascent peptide is terminated with the 'tag peptide' encoded by the tmRNA and targeted for degradation. The ribosome is freed to recommence translation, which seems to be the essential function of trans-translation. The protein is SsrA-binding protein of Anaplasma phagocytophilum (strain HZ).